The primary structure comprises 95 residues: IgNAR transmembrane form NE (95 aa).

An Ig-like domain is found at 1-36 (LTFSTRSLLNLPAVEWKSGAKYTCTASHSPSQSTVK). A compositionally biased stretch (polar residues) spans 24-35 (CTASHSPSQSTV). The tract at residues 24–79 (CTASHSPSQSTVKRVIRNPKESPKGSSETRKSPLEIMESPEDYGTEEDQLENVNED) is disordered. Positions 41-56 (NPKESPKGSSETRKSP) are enriched in basic and acidic residues. Acidic residues predominate over residues 61 to 77 (ESPEDYGTEEDQLENVN). N-linked (GlcNAc...) asparagine glycosylation is present at Asn81.

As to expression, expressed mainly in lymphoid tissues including spleen, epigonal organ and circulating lymphocytes. Also expressed at low levels in the pancreas.

The sequence is that of IgNAR transmembrane form NE from Ginglymostoma cirratum (Nurse shark).